We begin with the raw amino-acid sequence, 436 residues long: Methylenetetrahydrofolate--tRNA-(uracil-5-)-methyltransferase TrmFO (436 aa).

Residue 9–14 (GAGLAG) coordinates FAD.

It belongs to the MnmG family. TrmFO subfamily. The cofactor is FAD.

It localises to the cytoplasm. The catalysed reaction is uridine(54) in tRNA + (6R)-5,10-methylene-5,6,7,8-tetrahydrofolate + NADH + H(+) = 5-methyluridine(54) in tRNA + (6S)-5,6,7,8-tetrahydrofolate + NAD(+). It catalyses the reaction uridine(54) in tRNA + (6R)-5,10-methylene-5,6,7,8-tetrahydrofolate + NADPH + H(+) = 5-methyluridine(54) in tRNA + (6S)-5,6,7,8-tetrahydrofolate + NADP(+). Its function is as follows. Catalyzes the folate-dependent formation of 5-methyl-uridine at position 54 (M-5-U54) in all tRNAs. The chain is Methylenetetrahydrofolate--tRNA-(uracil-5-)-methyltransferase TrmFO from Acetivibrio thermocellus (strain ATCC 27405 / DSM 1237 / JCM 9322 / NBRC 103400 / NCIMB 10682 / NRRL B-4536 / VPI 7372) (Clostridium thermocellum).